We begin with the raw amino-acid sequence, 337 residues long: Biotin synthase (337 aa).

The 226-residue stretch at 58 to 283 folds into the Radical SAM core domain; that stretch reads PEVEVEGIIS…RTILRFAGGR (226 aa). [4Fe-4S] cluster contacts are provided by Cys73, Cys77, and Cys80. 4 residues coordinate [2Fe-2S] cluster: Cys116, Cys149, Cys208, and Arg278.

Belongs to the radical SAM superfamily. Biotin synthase family. In terms of assembly, homodimer. It depends on [4Fe-4S] cluster as a cofactor. [2Fe-2S] cluster serves as cofactor.

The catalysed reaction is (4R,5S)-dethiobiotin + (sulfur carrier)-SH + 2 reduced [2Fe-2S]-[ferredoxin] + 2 S-adenosyl-L-methionine = (sulfur carrier)-H + biotin + 2 5'-deoxyadenosine + 2 L-methionine + 2 oxidized [2Fe-2S]-[ferredoxin]. It functions in the pathway cofactor biosynthesis; biotin biosynthesis; biotin from 7,8-diaminononanoate: step 2/2. In terms of biological role, catalyzes the conversion of dethiobiotin (DTB) to biotin by the insertion of a sulfur atom into dethiobiotin via a radical-based mechanism. This Rhodococcus jostii (strain RHA1) protein is Biotin synthase.